The chain runs to 261 residues: Cytochrome c oxidase subunit 3 (261 aa).

Residues 1–15 (MAHQAHAYHMVDPSP) lie on the Mitochondrial matrix side of the membrane. The helical transmembrane segment at 16 to 34 (WPLTGAIAALLLTSGTAVW) threads the bilayer. Topologically, residues 35–40 (FHFHSL) are mitochondrial intermembrane. Residues 41–66 (TLLTLGNILLLLTMYQWWRDIIREGT) traverse the membrane as a helical segment. Topologically, residues 67-72 (FQGHHT) are mitochondrial matrix. Residues 73 to 105 (PPVQKGLRYGMILFITSEVFFFLGFFWAFYHAS) form a helical membrane-spanning segment. Topologically, residues 106–128 (LAPTPELGGCWPPAGITTLDPFE) are mitochondrial intermembrane. Residues 129–152 (VPLLNTAVLLASGVTVTWAHHSIM) form a helical membrane-spanning segment. The Mitochondrial matrix portion of the chain corresponds to 153 to 155 (EGE). The chain crosses the membrane as a helical span at residues 156–183 (RKQTIQALTLTILLGFYFTFLQGMEYYE). The Mitochondrial intermembrane portion of the chain corresponds to 184-190 (APFTIAD). Residues 191-223 (GVYGSTFFVATGFHGLHVIIGSTFLAVCLLRQV) traverse the membrane as a helical segment. The Mitochondrial matrix portion of the chain corresponds to 224-232 (QYHFTSEHH). The chain crosses the membrane as a helical span at residues 233–256 (FGFEAAAWYWHFVDVVWLFLYVSI). At 257–261 (YWWGS) the chain is on the mitochondrial intermembrane side.

This sequence belongs to the cytochrome c oxidase subunit 3 family. As to quaternary structure, component of the cytochrome c oxidase (complex IV, CIV), a multisubunit enzyme composed of 14 subunits. The complex is composed of a catalytic core of 3 subunits MT-CO1, MT-CO2 and MT-CO3, encoded in the mitochondrial DNA, and 11 supernumerary subunits COX4I, COX5A, COX5B, COX6A, COX6B, COX6C, COX7A, COX7B, COX7C, COX8 and NDUFA4, which are encoded in the nuclear genome. The complex exists as a monomer or a dimer and forms supercomplexes (SCs) in the inner mitochondrial membrane with NADH-ubiquinone oxidoreductase (complex I, CI) and ubiquinol-cytochrome c oxidoreductase (cytochrome b-c1 complex, complex III, CIII), resulting in different assemblies (supercomplex SCI(1)III(2)IV(1) and megacomplex MCI(2)III(2)IV(2)).

The protein localises to the mitochondrion inner membrane. The enzyme catalyses 4 Fe(II)-[cytochrome c] + O2 + 8 H(+)(in) = 4 Fe(III)-[cytochrome c] + 2 H2O + 4 H(+)(out). In terms of biological role, component of the cytochrome c oxidase, the last enzyme in the mitochondrial electron transport chain which drives oxidative phosphorylation. The respiratory chain contains 3 multisubunit complexes succinate dehydrogenase (complex II, CII), ubiquinol-cytochrome c oxidoreductase (cytochrome b-c1 complex, complex III, CIII) and cytochrome c oxidase (complex IV, CIV), that cooperate to transfer electrons derived from NADH and succinate to molecular oxygen, creating an electrochemical gradient over the inner membrane that drives transmembrane transport and the ATP synthase. Cytochrome c oxidase is the component of the respiratory chain that catalyzes the reduction of oxygen to water. Electrons originating from reduced cytochrome c in the intermembrane space (IMS) are transferred via the dinuclear copper A center (CU(A)) of subunit 2 and heme A of subunit 1 to the active site in subunit 1, a binuclear center (BNC) formed by heme A3 and copper B (CU(B)). The BNC reduces molecular oxygen to 2 water molecules using 4 electrons from cytochrome c in the IMS and 4 protons from the mitochondrial matrix. This chain is Cytochrome c oxidase subunit 3 (mt-co3), found in Oncorhynchus mykiss (Rainbow trout).